The primary structure comprises 259 residues: Global transcriptional regulator CodY (259 aa).

The interval 1-155 is GAF domain; that stretch reads MELLAKTRKL…SATVVGMEIL (155 aa). Residues 203 to 222 constitute a DNA-binding region (H-T-H motif); it reads ASKIADRVGITRSVIVNALR. Ser215 bears the Phosphoserine mark.

Belongs to the CodY family.

The protein localises to the cytoplasm. Its function is as follows. DNA-binding global transcriptional regulator which is involved in the adaptive response to starvation and acts by directly or indirectly controlling the expression of numerous genes in response to nutrient availability. During rapid exponential growth, CodY is highly active and represses genes whose products allow adaptation to nutrient depletion. The protein is Global transcriptional regulator CodY of Bacillus cytotoxicus (strain DSM 22905 / CIP 110041 / 391-98 / NVH 391-98).